The chain runs to 283 residues: Non-selective voltage-gated ion channel VDAC3 (283 aa).

Cys2 is modified (N-acetylcysteine). Thr4 carries the phosphothreonine modification. 3 positions are modified to N6-acetyllysine: Lys12, Lys15, and Lys20. 2 beta stranded membrane-spanning segments follow: residues 26-35 (MVKIDLKTKS) and 39-47 (VEFSTSGHA). Residue Lys53 forms a Glycyl lysine isopeptide (Lys-Gly) (interchain with G-Cter in ubiquitin) linkage. Beta stranded transmembrane passes span 54 to 64 (ASGNLETKYKV), 69 to 76 (LTFTQKWN), and 80 to 89 (TLGTEISWEN). Lys90 carries the post-translational modification N6-acetyllysine. The beta stranded transmembrane segment at 95 to 104 (LKLTLDTIFV) threads the bilayer. Residues Lys109 and Lys110 each participate in a glycyl lysine isopeptide (Lys-Gly) (interchain with G-Cter in ubiquitin) cross-link. The next 10 membrane-spanning stretches (beta stranded) occupy residues 111-120 (SGKLKASYRR), 123-130 (FSLGSNVD), 137-145 (TIYGWAVLA), 150-158 (LAGYQMSFD), 163-175 (KLSQ…GYKA), 178-185 (FQLHTHVN), 189-198 (EFGGSIYQKV), 202-211 (IETSINLAWT), 218-227 (RFGIAAKYKL), and 231-238 (TSLSAKVN). A Phosphoserine modification is found at Ser241. NAD(+) contacts are provided by residues 242-244 (LIG) and 260-264 (SALID). The next 2 membrane-spanning stretches (beta stranded) occupy residues 242–251 (LIGLGYTQTL) and 254–263 (GVKLTLSALI). Lys266 bears the N6-acetyllysine; alternate mark. Residue Lys266 forms a Glycyl lysine isopeptide (Lys-Gly) (interchain with G-Cter in ubiquitin); alternate linkage. The chain crosses the membrane as a beta stranded span at residues 273 to 282 (HKVGLGFELE).

The protein belongs to the eukaryotic mitochondrial porin family. Interacts with ARMC12 in a TBC1D21-dependent manner. Interacts with MISFA. In terms of processing, ubiquitinated by PRKN during mitophagy, leading to its degradation and enhancement of mitophagy. Deubiquitinated by USP30. In terms of tissue distribution, highest levels of expression detected in testis, less but still abundant expression in heart, kidney, brain, and skeletal muscle.

It localises to the mitochondrion outer membrane. The protein resides in the membrane. It catalyses the reaction chloride(in) = chloride(out). The catalysed reaction is K(+)(in) = K(+)(out). Functionally, non-selective voltage-gated ion channel that mediates the transport of anions and cations through the mitochondrion outer membrane and plasma membrane. Forms a high-conducting channel with a stable open state and a voltage-induced closure with a mild preference for anions over cations. Involved in male fertility and sperm mitochondrial sheath formation. The protein is Non-selective voltage-gated ion channel VDAC3 of Mus musculus (Mouse).